The primary structure comprises 137 residues: Ribosome-binding factor A (137 aa).

The protein belongs to the RbfA family. Monomer. Binds 30S ribosomal subunits, but not 50S ribosomal subunits or 70S ribosomes.

It is found in the cytoplasm. In terms of biological role, one of several proteins that assist in the late maturation steps of the functional core of the 30S ribosomal subunit. Associates with free 30S ribosomal subunits (but not with 30S subunits that are part of 70S ribosomes or polysomes). Required for efficient processing of 16S rRNA. May interact with the 5'-terminal helix region of 16S rRNA. The protein is Ribosome-binding factor A of Allorhizobium ampelinum (strain ATCC BAA-846 / DSM 112012 / S4) (Agrobacterium vitis (strain S4)).